We begin with the raw amino-acid sequence, 962 residues long: Translation initiation factor IF-2 (962 aa).

A compositionally biased stretch (basic and acidic residues) spans 52–77 (RSHGQADDSSRKKITLTKRETSEIRQ). Disordered regions lie at residues 52 to 87 (RSHG…TRTV) and 121 to 378 (AVEE…EPVV). A compositionally biased stretch (polar residues) spans 78 to 87 (SDGTGKTRTV). Basic and acidic residues-rich tracts occupy residues 123-183 (EEAR…KAEE), 197-250 (DSSR…EAEA), and 267-278 (PSERKAEEKKAE). A compositionally biased stretch (gly residues) spans 342-355 (TSGGVGGWRGGPRG). The 170-residue stretch at 462-631 (PRPPVVTVMG…LLQAEVLELT (170 aa)) folds into the tr-type G domain. A G1 region spans residues 471–478 (GHVDHGKT). GTP is bound at residue 471–478 (GHVDHGKT). Residues 496 to 500 (GITQH) form a G2 region. Residues 517–520 (DTPG) are G3. Residues 517 to 521 (DTPGH) and 571 to 574 (NKID) each bind GTP. Residues 571 to 574 (NKID) form a G4 region. Residues 607-609 (SAK) form a G5 region.

The protein belongs to the TRAFAC class translation factor GTPase superfamily. Classic translation factor GTPase family. IF-2 subfamily.

The protein localises to the cytoplasm. Functionally, one of the essential components for the initiation of protein synthesis. Protects formylmethionyl-tRNA from spontaneous hydrolysis and promotes its binding to the 30S ribosomal subunits. Also involved in the hydrolysis of GTP during the formation of the 70S ribosomal complex. The protein is Translation initiation factor IF-2 of Cupriavidus necator (strain ATCC 17699 / DSM 428 / KCTC 22496 / NCIMB 10442 / H16 / Stanier 337) (Ralstonia eutropha).